Reading from the N-terminus, the 966-residue chain is Polycystin-2 (966 aa).

The tract at residues 1 to 106 is disordered; the sequence is MVNSRRVQPQ…DDDEVEGEEG (106 aa). Over 1–217 the chain is Cytoplasmic; that stretch reads MVNSRRVQPQ…NANREKYLKS (217 aa). Gly residues predominate over residues 30–44; that stretch reads VAGGAGLAVPGGLGE. Residues 46–56 show a composition bias toward basic and acidic residues; the sequence is RGLEIEMERIR. Over residues 58–79 the composition is skewed to low complexity; sequence AAARDPPAGASASPSPPLSSCS. Ser-72 and Ser-76 each carry phosphoserine. Residues 91–105 are compositionally biased toward acidic residues; it reads EAEEDDDDDEVEGEE. An Omega-N-methylarginine modification is found at Arg-135. The tract at residues 147–179 is disordered; the sequence is HLSGRRRRLEDQGAQCPSPAGGGDPLHRHLPLE. Residues 218 to 239 traverse the membrane as a helical segment; it reads VLRELVTYLFFLVVLCILTYGM. Residues 240–466 are Extracellular-facing; the sequence is MSSNVYYYTR…PVKLIRYVTA (227 aa). Residues Asn-297, Asn-303, and Asn-326 are each glycosylated (N-linked (GlcNAc...) asparagine). Cys-329 and Cys-342 form a disulfide bridge. N-linked (GlcNAc...) asparagine glycosylation is found at Asn-360 and Asn-373. The chain crosses the membrane as a helical span at residues 467–487; sequence FDFFLAACEIIFCFFIIYYVV. The Cytoplasmic portion of the chain corresponds to 488–503; that stretch reads EEILEIRIHRLSYFRS. Residues 504–524 form a helical membrane-spanning segment; it reads FWNCLDVVIVVLSVVAMVINI. Over 525–550 the chain is Extracellular; that stretch reads YRMSNAEGLLQFLEDQNSFPNFEHVA. Residues 551 to 571 traverse the membrane as a helical segment; that stretch reads YWQIQFNNISAVMVFLVWIKL. Position 555 (Gln-555) interacts with cholesterol. Topologically, residues 572–595 are cytoplasmic; that stretch reads FKFINFNRTMSQLSTTMSRCAKDL. Residues 596–617 form a helical membrane-spanning segment; that stretch reads FGFTIMFSIIFLAYAQLAYLVF. At 618–629 the chain is on the extracellular side; the sequence is GTQVDDFSTFQE. Residues 630–644 constitute an intramembrane region (pore-forming); sequence CIFTQFRIILGDINF. Leu-639 is a binding site for Ca(2+). Residues 639–641 carry the Selectivity filter motif; sequence LGD. The Extracellular portion of the chain corresponds to 645–652; sequence AEIEEANR. Residues 653–673 form a helical membrane-spanning segment; that stretch reads VLGPLYFTTFVFFMFFILLNM. Over 674–966 the chain is Cytoplasmic; the sequence is FLAIINDSYS…GGNGSANVHA (293 aa). The region spanning 748–783 is the EF-hand domain; sequence HTDAEIEAIFTKYDQDGDQELTEREHQQMRDDLEKE. Residues Asp-761, Asp-763, Asp-765, Glu-767, and Glu-772 each coordinate Ca(2+). The interval 764 to 828 is disordered; sequence GDQELTEREH…GHSSRRRGSI (65 aa). Residues 768–793 are compositionally biased toward basic and acidic residues; that stretch reads LTEREHQQMRDDLEKEREDLDLEHSS. Low complexity predominate over residues 794–805; it reads LPRPMSSRSFPR. 4 positions are modified to phosphoserine: Ser-799, Ser-806, Ser-810, and Ser-827. The interval 801 to 820 is linker; it reads RSFPRSLDDSEEEDDEDSGH. Positions 808–819 are important for interaction with PACS1 and PACS2; it reads DDSEEEDDEDSG. Residues 831–870 are a coiled coil; it reads GVSYEEFQVLVRRVDRMEHSIGSIVSKIDAVIVKLEIMER. A disordered region spans residues 914 to 966; it reads WESDDAASQTGHGVSTQVGLGGQPHPRNPRPPSSQSAEGLEGGGGNGSANVHA. The segment covering 919 to 931 has biased composition (polar residues); that stretch reads AASQTGHGVSTQV.

The protein belongs to the polycystin family. Homotetramer. Component of the heterotetrameric polycystin channel complex with PKD1; the tetramer contains one PKD1 chain and three PKD2 chains. Interaction with PKD1 is required for ciliary localization. Isoform 1 interacts with PKD1 while isoform 3 does not. Interacts with PKD1L1. Interacts with CD2AP. Interacts with HAX1. Interacts with NEK8. Part of a complex containing AKAP5, ADCY5, ADCY6 and PDE4C. Interacts (via C-terminus) with TRPV4 (via C-terminus). Interacts (via C-terminal acidic region) with PACS1 and PACS2; these interactions retain the protein in the endoplasmic reticulum and prevent trafficking to the cell membrane. Interacts with TMEM33; enhancing its opening at the ER membrane. Interacts with TMEM120A; TMEM120A inhibits PKD2 channel activity through the physical association of PKD2 with TMEM120A. Interacts (via N-terminus) with RYR2; regulates RYR2 channel activity. Post-translationally, N-glycosylated. The four subunits in a tetramer probably differ in the extent of glycosylation; simultaneous glycosylation of all experimentally validated sites would probably create steric hindrance. Sumoylated by SUMO1; sumoylation regulates PKD2 membrane recycling and is necessary for intravascular pressure-induced arterial contractility. In terms of processing, phosphorylated. Phosphorylation is important for protein function; a mutant that lacks the N-terminal phosphorylation sites cannot complement a zebrafish pkd2-deficient mutant. PKD-mediated phosphorylation at the C-terminus regulates its function in the release of Ca(2+) stores from the endoplasmic reticulum. Phosphorylation at Ser-810 regulates PKD2 trafficking. Phosphorylation at Ser-72 is required for PKD2 trafficking to or retention at the lateral plasma membrane. Phosphorylation at Ser-799, Ser-810 and Ser-827 regulates PKD2 channel activity. In terms of tissue distribution, detected in kidney epithelium (at protein level). Highly expressed on basolateral membranes in distal convoluted tubules and medullary thick ascending limbs of Henle. Detected at much lower levels in cortical and medullary collecting tubules, and not detected in the glomerular tuft, in thin limbs of Henle, interstitium and blood vessels (at protein level). Expressed in mesenchymally derived structures in the developing embryo at day 12.5. Isoform 1 is predominantly expressed in kidney at all developmental stages with high levels also detected in lung. Isoform 3 shows highest expression in brain with lower expression in kidney and lung, low levels in thymus and is hardly detectable in liver.

The protein resides in the cell projection. The protein localises to the cilium membrane. It is found in the cell membrane. Its subcellular location is the basolateral cell membrane. It localises to the cytoplasmic vesicle membrane. The protein resides in the endoplasmic reticulum membrane. The protein localises to the golgi apparatus. It is found in the vesicle. Its subcellular location is the secreted. It localises to the extracellular exosome. It carries out the reaction K(+)(in) = K(+)(out). The enzyme catalyses Na(+)(in) = Na(+)(out). It catalyses the reaction Ca(2+)(in) = Ca(2+)(out). With respect to regulation, channel activity is regulated by phosphorylation. The channel is activated by increased cytoplasmic Ca(2+) (in the uM range) and by membrane depolarization. TMEM120A inhibits the channel activity of PKD2, and mediates mechanosensitivity of the PKD2-TMEM120A channel complex. At the endoplasmic reticulum membrane (ER), TMEM33 enhances its channel activity. PKD1/ PKD2 complex on the plasma membrane is activated by PKD1 N-terminus. Its function is as follows. Forms a nonselective cation channel. Can function as a homotetrameric ion channel or can form heteromer with PKD1. Displays distinct function depending on its subcellular localization and regulation by its binding partners. Functions as a cation channel, with a preference for monovalent cations over divalent cations that allows K(+), Na(+) and Ca(2+) influx, with low selectivity for Ca(2+). Involved in fluid-flow mechanosensation by the primary cilium in renal epithelium. In the endoplasmic reticulum, likely functions as a K(+) channel to facilitate Ca(2+) release. The heterotetrameric PKD1/PKD2 channel has higher Ca(2+) permeability than homomeric PKD2 channel and acts as a primarily Ca(2+)-permeable channel. PKD1 and PKD2 may function through a common signaling pathway that is necessary to maintain the normal, differentiated state of renal tubule cells. Interacts with and acts as a regulator of a number of other channels, such as TRPV4, TRPC1, IP3R, RYR2, ultimately further affecting intracellular signaling, to modulate intracellular Ca(2+) signaling. Together with TRPV4, forms mechano- and thermosensitive channels in cilium. In cardiomyocytes, PKD2 modulates Ca(2+) release from stimulated RYR2 receptors through direct association. Also involved in left-right axis specification via its role in sensing nodal flow; forms a complex with PKD1L1 in cilia to facilitate flow detection in left-right patterning. Acts as a regulator of cilium length together with PKD1. Mediates systemic blood pressure and contributes to the myogenic response in cerebral arteries though vasoconstriction. The protein is Polycystin-2 of Mus musculus (Mouse).